Reading from the N-terminus, the 282-residue chain is Tyrosine recombinase XerA (282 aa).

Residues 2–79 (SEPNEVIEEF…ALRAYFRFEG (78 aa)) form the Core-binding (CB) domain. The region spanning 95–271 (SLPKALTREE…TVEHLRKAQE (177 aa)) is the Tyr recombinase domain. Residues Arg132, Lys157, His223, Arg226, and His249 contribute to the active site. Catalysis depends on Tyr258, which acts as the O-(3'-phospho-DNA)-tyrosine intermediate.

This sequence belongs to the 'phage' integrase family. XerA subfamily.

It is found in the cytoplasm. Its function is as follows. Site-specific tyrosine recombinase, which acts by catalyzing the cutting and rejoining of the recombining DNA molecules. In Thermococcus kodakarensis (strain ATCC BAA-918 / JCM 12380 / KOD1) (Pyrococcus kodakaraensis (strain KOD1)), this protein is Tyrosine recombinase XerA.